An 876-amino-acid polypeptide reads, in one-letter code: Alanine--tRNA ligase (876 aa).

Lysine 74 bears the N6-acetyllysine mark. Zn(2+) is bound by residues histidine 564, histidine 568, cysteine 666, and histidine 670.

This sequence belongs to the class-II aminoacyl-tRNA synthetase family. As to quaternary structure, homotetramer. The cofactor is Zn(2+).

The protein resides in the cytoplasm. It carries out the reaction tRNA(Ala) + L-alanine + ATP = L-alanyl-tRNA(Ala) + AMP + diphosphate. Functionally, catalyzes the attachment of alanine to tRNA(Ala) in a two-step reaction: alanine is first activated by ATP to form Ala-AMP and then transferred to the acceptor end of tRNA(Ala). Also edits incorrectly charged Ser-tRNA(Ala) and Gly-tRNA(Ala) via its editing domain. This is Alanine--tRNA ligase from Escherichia coli O9:H4 (strain HS).